Reading from the N-terminus, the 511-residue chain is Ribonuclease Y (511 aa).

Residues V3–F23 form a helical membrane-spanning segment. The region spanning S201–L261 is the KH domain. The region spanning L327–A420 is the HD domain.

It belongs to the RNase Y family.

Its subcellular location is the cell membrane. In terms of biological role, endoribonuclease that initiates mRNA decay. The polypeptide is Ribonuclease Y (Bacteroides fragilis (strain ATCC 25285 / DSM 2151 / CCUG 4856 / JCM 11019 / LMG 10263 / NCTC 9343 / Onslow / VPI 2553 / EN-2)).